A 1553-amino-acid chain; its full sequence is Dual oxidase 1 (1553 aa).

The first 21 residues, 1-21, serve as a signal peptide directing secretion; that stretch reads MGFRLALAWTLLVGPWMPMGA. The Extracellular portion of the chain corresponds to 22–596; the sequence is RNSISWEVQR…YFKGSGFGFG (575 aa). Residues 26–593 form a peroxidase-like; mediates peroxidase activity region; the sequence is SWEVQRFDGW…MRDYFKGSGF (568 aa). Asn-94, Asn-342, Asn-354, and Asn-534 each carry an N-linked (GlcNAc...) asparagine glycan. A helical transmembrane segment spans residues 597–617; that stretch reads VTIGTLCCFPLVSLLSAWIVA. At 618–1046 the chain is on the cytoplasmic side; it reads QLRRRNFKRL…KRFVENYRRH (429 aa). 3 EF-hand domains span residues 815–850, 851–886, and 895–930; these read PQDM…FMKG, SPEE…FIEI, and QLTE…HDSE. Ca(2+) is bound by residues Asp-828, Asp-830, Asn-832, Tyr-834, Glu-839, Asp-864, Asp-866, Asn-868, and Glu-875. Positions 956–1250 are interaction with TXNDC11; sequence YISQEKLCPS…GSFALIQLPR (295 aa). Residues 1047–1067 traverse the membrane as a helical segment; the sequence is IGCLAVFYTIAGGLFLERAYY. The Extracellular portion of the chain corresponds to 1068–1082; that stretch reads YAFAAHHMGITDTTR. A helical membrane pass occupies residues 1083–1103; it reads VGIILSRGTAASISFMFSYIL. Positions 1089–1271 constitute a Ferric oxidoreductase domain; sequence RGTAASISFM…YVGDKLVSLS (183 aa). Residues 1104-1138 are Cytoplasmic-facing; that stretch reads LTMCRNLITFLRETFLNRYVPFDAAVDFHRLIAST. A helical membrane pass occupies residues 1139 to 1159; sequence AIILTVLHSAGHVVNVYLFSI. The Extracellular segment spans residues 1160–1190; that stretch reads SPLSVLSCLFPGLFHDNGSEFPQKYYWWFFQ. The helical transmembrane segment at 1191–1211 threads the bilayer; it reads TVPGLTGVMLLLILAIMYVFA. Residues 1212-1228 lie on the Cytoplasmic side of the membrane; it reads SHHFRRCSFRGFWLTHH. Residues 1229–1249 traverse the membrane as a helical segment; it reads LYILLYMLLIIHGSFALIQLP. Arg-1250 is a topological domain (extracellular). The chain crosses the membrane as a helical span at residues 1251 to 1271; sequence FHIFFLVPALIYVGDKLVSLS. An FAD-binding FR-type domain is found at 1272–1378; that stretch reads RKKVEISVVK…DGPFGEGHQE (107 aa). The Cytoplasmic segment spans residues 1272-1553; that stretch reads RKKVEISVVK…THFSHHYENF (282 aa).

The protein in the N-terminal section; belongs to the peroxidase family. In terms of assembly, interacts with TXNDC11, TPO and CYBA. In terms of processing, N-glycosylated. Specifically expressed in thyroid.

The protein localises to the apical cell membrane. It catalyses the reaction NADH + O2 + H(+) = H2O2 + NAD(+). The enzyme catalyses NADPH + O2 + H(+) = H2O2 + NADP(+). It participates in hormone biosynthesis; thyroid hormone biosynthesis. With respect to regulation, the NADPH oxidase activity is calcium-dependent. Peroxidase activity is inhibited by aminobenzohydrazide. Its function is as follows. Generates hydrogen peroxide which is required for the activity of thyroid peroxidase/TPO and lactoperoxidase/LPO. Plays a role in thyroid hormones synthesis and lactoperoxidase-mediated antimicrobial defense at the surface of mucosa. May have its own peroxidase activity through its N-terminal peroxidase-like domain. This is Dual oxidase 1 (DUOX1) from Sus scrofa (Pig).